Here is a 428-residue protein sequence, read N- to C-terminus: Serine hydroxymethyltransferase (428 aa).

Residues Leu117 and 121 to 123 (GHL) contribute to the (6S)-5,6,7,8-tetrahydrofolate site. At Lys226 the chain carries N6-(pyridoxal phosphate)lysine.

Belongs to the SHMT family. Homodimer. It depends on pyridoxal 5'-phosphate as a cofactor.

The protein resides in the cytoplasm. The enzyme catalyses (6R)-5,10-methylene-5,6,7,8-tetrahydrofolate + glycine + H2O = (6S)-5,6,7,8-tetrahydrofolate + L-serine. It participates in one-carbon metabolism; tetrahydrofolate interconversion. The protein operates within amino-acid biosynthesis; glycine biosynthesis; glycine from L-serine: step 1/1. Functionally, catalyzes the reversible interconversion of serine and glycine with tetrahydrofolate (THF) serving as the one-carbon carrier. This reaction serves as the major source of one-carbon groups required for the biosynthesis of purines, thymidylate, methionine, and other important biomolecules. Also exhibits THF-independent aldolase activity toward beta-hydroxyamino acids, producing glycine and aldehydes, via a retro-aldol mechanism. The polypeptide is Serine hydroxymethyltransferase (Aquifex aeolicus (strain VF5)).